The chain runs to 240 residues: Protein FANTASTIC FOUR 2 (240 aa).

Disordered regions lie at residues 89–124 and 177–229; these read TTPR…PPIK and LLSH…KPML. An FAF domain is found at 117-171; sequence NSFPPPIKFVEDSKYNRMVRWLGEDGRIVVQAIRVSSPPSCFVSERGEGRLRLIL. Over residues 184–200 the composition is skewed to acidic residues; the sequence is EEEEEETEEGIDEETSE. Positions 207–216 are enriched in basic residues; it reads GNKKFSRFSR. Residues 217–226 are compositionally biased toward basic and acidic residues; sequence RCKENGREPK.

The protein belongs to the fantastic four family. Expressed in the shoot apex, stamens, carpels and young siliques. Detected in provascular and vascular tissue, and in the center of the vegetative and inflorescence meristems. Expressed in the funiculus. In roots and leaves, predominantly expressed in phloem.

Regulates the size of the shoot meristem by modulating the CLV3-WUS feedback loop. Can repress WUS but is under negative control by CLV3. The polypeptide is Protein FANTASTIC FOUR 2 (FAF2) (Arabidopsis thaliana (Mouse-ear cress)).